A 358-amino-acid polypeptide reads, in one-letter code: UDP-N-acetylglucosamine--N-acetylmuramyl-(pentapeptide) pyrophosphoryl-undecaprenol N-acetylglucosamine transferase (358 aa).

Residues 11–13 (TGG), Asn120, Arg161, Ser188, and Gln282 each bind UDP-N-acetyl-alpha-D-glucosamine.

Belongs to the glycosyltransferase 28 family. MurG subfamily.

It localises to the cell inner membrane. It catalyses the reaction di-trans,octa-cis-undecaprenyl diphospho-N-acetyl-alpha-D-muramoyl-L-alanyl-D-glutamyl-meso-2,6-diaminopimeloyl-D-alanyl-D-alanine + UDP-N-acetyl-alpha-D-glucosamine = di-trans,octa-cis-undecaprenyl diphospho-[N-acetyl-alpha-D-glucosaminyl-(1-&gt;4)]-N-acetyl-alpha-D-muramoyl-L-alanyl-D-glutamyl-meso-2,6-diaminopimeloyl-D-alanyl-D-alanine + UDP + H(+). The protein operates within cell wall biogenesis; peptidoglycan biosynthesis. In terms of biological role, cell wall formation. Catalyzes the transfer of a GlcNAc subunit on undecaprenyl-pyrophosphoryl-MurNAc-pentapeptide (lipid intermediate I) to form undecaprenyl-pyrophosphoryl-MurNAc-(pentapeptide)GlcNAc (lipid intermediate II). The polypeptide is UDP-N-acetylglucosamine--N-acetylmuramyl-(pentapeptide) pyrophosphoryl-undecaprenol N-acetylglucosamine transferase (Parasynechococcus marenigrum (strain WH8102)).